The primary structure comprises 306 residues: D-alanine--D-alanine ligase (306 aa).

The ATP-grasp domain occupies 101-303; the sequence is KLVWQALGLP…FSQLVARILM (203 aa). 134–189 serves as a coordination point for ATP; that stretch reads VAKLGLPLIVKPSHEGSSVGMSKVDHASELQKALVEAFQHDSDVLIEKWLSGPEFT. Mg(2+) contacts are provided by D257, E270, and N272.

Belongs to the D-alanine--D-alanine ligase family. The cofactor is Mg(2+). Requires Mn(2+) as cofactor.

The protein resides in the cytoplasm. The enzyme catalyses 2 D-alanine + ATP = D-alanyl-D-alanine + ADP + phosphate + H(+). It functions in the pathway cell wall biogenesis; peptidoglycan biosynthesis. Cell wall formation. This is D-alanine--D-alanine ligase from Yersinia pseudotuberculosis serotype O:1b (strain IP 31758).